A 326-amino-acid chain; its full sequence is tRNA-modifying protein YgfZ (326 aa).

Residues Trp27 and Trp189 each coordinate folate.

It belongs to the tRNA-modifying YgfZ family.

It is found in the cytoplasm. In terms of biological role, folate-binding protein involved in regulating the level of ATP-DnaA and in the modification of some tRNAs. It is probably a key factor in regulatory networks that act via tRNA modification, such as initiation of chromosomal replication. The polypeptide is tRNA-modifying protein YgfZ (Escherichia coli O127:H6 (strain E2348/69 / EPEC)).